We begin with the raw amino-acid sequence, 975 residues long: Macrophage colony-stimulating factor 1 receptor 1 (975 aa).

The first 17 residues, M1–S17, serve as a signal peptide directing secretion. The Extracellular segment spans residues V18–S519. 5 Ig-like C2-type domains span residues S34–K113, S125–I208, M221–V310, G329–K407, and F404–S513. 3 disulfide bridges follow: C49–C93, C140–C189, and C236–C292. N-linked (GlcNAc...) asparagine glycosylation is found at N156, N165, N246, N250, N289, N301, N399, N420, and N451. C426 and C495 are disulfide-bonded. Residues T520–Y540 traverse the membrane as a helical segment. Residues K541–C975 lie on the Cytoplasmic side of the membrane. Positions Q544–K576 are regulatory juxtamembrane domain. Y563 is subject to Phosphotyrosine; by autocatalysis. The Protein kinase domain occupies L584–L918. ATP is bound by residues L590–V598 and K619. Y702 and Y726 each carry phosphotyrosine; by autocatalysis. The Proton acceptor role is filled by D782. The activation loop stretch occupies residues D800–P822. Phosphotyrosine; by autocatalysis is present on residues Y813 and Y929. Residues E939–E963 are disordered. Over residues D944–D958 the composition is skewed to basic and acidic residues. The residue at position 972 (Y972) is a Phosphotyrosine; by autocatalysis.

Belongs to the protein kinase superfamily. Tyr protein kinase family. CSF-1/PDGF receptor subfamily. In terms of assembly, monomer. Homodimer. Interacts with CSF1. Autophosphorylated in response to CSF1 binding. autophosphorylation, leading to its degradation. Post-translationally, ubiquitinated. Becomes rapidly polyubiquitinated after autophosphorylation, leading to its degradation.

Its subcellular location is the cell membrane. It carries out the reaction L-tyrosyl-[protein] + ATP = O-phospho-L-tyrosyl-[protein] + ADP + H(+). Its activity is regulated as follows. Present in an inactive conformation in the absence of bound ligand. CSF1 binding leads to dimerization and activation by autophosphorylation on tyrosine residues. Its function is as follows. Tyrosine-protein kinase that acts as a cell-surface receptor for CSF1 and plays an essential role in the regulation of survival, proliferation and differentiation of hematopoietic precursor cells, especially mononuclear phagocytes, such as macrophages and monocytes. Plays an important role in innate immunity and in inflammatory processes. Plays an important role in the regulation of osteoclast proliferation and differentiation, the regulation of bone resorption, and is required for normal bone development. Promotes reorganization of the actin cytoskeleton, regulates formation of membrane ruffles, cell adhesion and cell migration. Activates several signaling pathways in response to ligand binding. In Takifugu rubripes (Japanese pufferfish), this protein is Macrophage colony-stimulating factor 1 receptor 1 (csf1r1).